Consider the following 196-residue polypeptide: uncharacterized protein (196 aa).

Residues 1-21 are disordered; the sequence is MQPEVEPLISPNLGAPGSHRE.

This is an uncharacterized protein from Mus musculus (Mouse).